Consider the following 494-residue polypeptide: V-type proton ATPase subunit B (494 aa).

An ATP-binding site is contributed by arginine 384.

The protein belongs to the ATPase alpha/beta chains family. V-ATPase is a heteromultimeric enzyme made up of two complexes: the ATP-hydrolytic V1 complex and the proton translocation V0 complex. The V1 complex consists of three catalytic AB heterodimers that form a heterohexamer, three peripheral stalks each consisting of EG heterodimers, one central rotor including subunits D and F, and the regulatory subunits C and H. The proton translocation complex V0 consists of the proton transport subunit a, a ring of proteolipid subunits c9c'', rotary subunit d, subunits e and f, and the accessory subunits VhaAC45 and ATP6AP2.

Its function is as follows. Non-catalytic subunit of the V1 complex of vacuolar(H+)-ATPase (V-ATPase), a multisubunit enzyme composed of a peripheral complex (V1) that hydrolyzes ATP and a membrane integral complex (V0) that translocates protons. V-ATPase is responsible for acidifying and maintaining the pH of intracellular compartments and in some cell types, is targeted to the plasma membrane, where it is responsible for acidifying the extracellular environment. Essential for the proper assembly and activity of V-ATPase. This Heliothis virescens (Tobacco budworm moth) protein is V-type proton ATPase subunit B (VHA55).